The chain runs to 214 residues: Ribosomal RNA small subunit methyltransferase G (214 aa).

S-adenosyl-L-methionine is bound by residues G81, M86, 132 to 133, and R147; that span reads AE.

This sequence belongs to the methyltransferase superfamily. RNA methyltransferase RsmG family.

The protein resides in the cytoplasm. It catalyses the reaction guanosine(527) in 16S rRNA + S-adenosyl-L-methionine = N(7)-methylguanosine(527) in 16S rRNA + S-adenosyl-L-homocysteine. Specifically methylates the N7 position of guanine in position 527 of 16S rRNA. This Pseudomonas syringae pv. syringae (strain B728a) protein is Ribosomal RNA small subunit methyltransferase G.